We begin with the raw amino-acid sequence, 61 residues long: Photosystem II reaction center protein K (61 aa).

Residues Met1 to Gly24 constitute a propeptide that is removed on maturation. A helical transmembrane segment spans residues Ile36–Ala56.

The protein belongs to the PsbK family. As to quaternary structure, PSII is composed of 1 copy each of membrane proteins PsbA, PsbB, PsbC, PsbD, PsbE, PsbF, PsbH, PsbI, PsbJ, PsbK, PsbL, PsbM, PsbT, PsbX, PsbY, PsbZ, Psb30/Ycf12, at least 3 peripheral proteins of the oxygen-evolving complex and a large number of cofactors. It forms dimeric complexes.

It localises to the plastid. The protein resides in the chloroplast thylakoid membrane. In terms of biological role, one of the components of the core complex of photosystem II (PSII). PSII is a light-driven water:plastoquinone oxidoreductase that uses light energy to abstract electrons from H(2)O, generating O(2) and a proton gradient subsequently used for ATP formation. It consists of a core antenna complex that captures photons, and an electron transfer chain that converts photonic excitation into a charge separation. The polypeptide is Photosystem II reaction center protein K (Solanum bulbocastanum (Wild potato)).